The chain runs to 770 residues: Penicillin-binding protein 1C (770 aa).

Residues 1–8 (MPRLLTKR) lie on the Cytoplasmic side of the membrane. Residues 9–29 (GCWITLAAAPFLLFLAAWGAD) form a helical; Signal-anchor for type II membrane protein membrane-spanning segment. Over 30–770 (KLWPLPLHEV…QIATVKFVMQ (741 aa)) the chain is Periplasmic. Positions 43–213 (RVVVAQDGTP…SRLRPDRWPE (171 aa)) are transglycosylase. Residue Glu-84 is the Proton donor; for transglycosylase activity of the active site. The segment at 278–559 (AGLQRRLEEL…FASAVPLLNQ (282 aa)) is transpeptidase. The Acyl-ester intermediate; for transpeptidase activity role is filled by Ser-342.

This sequence in the N-terminal section; belongs to the glycosyltransferase 51 family. It in the C-terminal section; belongs to the transpeptidase family.

The protein localises to the cell inner membrane. It catalyses the reaction [GlcNAc-(1-&gt;4)-Mur2Ac(oyl-L-Ala-gamma-D-Glu-L-Lys-D-Ala-D-Ala)](n)-di-trans,octa-cis-undecaprenyl diphosphate + beta-D-GlcNAc-(1-&gt;4)-Mur2Ac(oyl-L-Ala-gamma-D-Glu-L-Lys-D-Ala-D-Ala)-di-trans,octa-cis-undecaprenyl diphosphate = [GlcNAc-(1-&gt;4)-Mur2Ac(oyl-L-Ala-gamma-D-Glu-L-Lys-D-Ala-D-Ala)](n+1)-di-trans,octa-cis-undecaprenyl diphosphate + di-trans,octa-cis-undecaprenyl diphosphate + H(+). The protein operates within cell wall biogenesis; peptidoglycan biosynthesis. With respect to regulation, transglycosylase activity can be inhibited by moenomycin. Functionally, cell wall formation. The enzyme has a penicillin-insensitive transglycosylase N-terminal domain (formation of linear glycan strands) and a transpeptidase C-terminal domain which may not be functional. The chain is Penicillin-binding protein 1C (pbpC) from Escherichia coli (strain K12).